The sequence spans 56 residues: Ovomucoid (56 aa).

The 51-residue stretch at 6 to 56 (VDCSDHPKPACLQEQKPICGSDNKTYDNKCSFCNAVVDSNGTLTLSHFGKC) folds into the Kazal-like domain. 3 disulfide bridges follow: cysteine 8/cysteine 38, cysteine 16/cysteine 35, and cysteine 24/cysteine 56. N-linked (GlcNAc...) asparagine glycosylation occurs at asparagine 45.

It is found in the secreted. The protein is Ovomucoid of Ortalis vetula (Plain chachalaca).